The primary structure comprises 201 residues: Putative pseudouridine methyltransferase (201 aa).

S-adenosyl-L-methionine-binding residues include M132 and C186.

The protein belongs to the methyltransferase superfamily. TrmY family.

The protein resides in the cytoplasm. This is Putative pseudouridine methyltransferase from Vibrio cholerae serotype O1 (strain ATCC 39315 / El Tor Inaba N16961).